The chain runs to 942 residues: Mitogen-activated protein kinase kinase kinase 14 (942 aa).

The span at 136-152 (GKRHGKARKKRRKKRSK) shows a compositional bias: basic residues. 2 disordered regions span residues 136–156 (GKRHGKARKKRRKKRSKSLAQ) and 291–326 (VSGQRPLPGPPHLSQLAHGDSQKPLPGPHLESSCPS). The region spanning 402–657 (MTHQPRVGRG…ELRRKVGKAL (256 aa)) is the Protein kinase domain. The tract at residues 403-655 (THQPRVGRGS…AMELRRKVGK (253 aa)) is interaction with ZFP91. ATP is bound by residues 408-416 (VGRGSFGEV) and K431. The active-site Proton acceptor is the D517. T561 bears the Phosphothreonine mark. 2 disordered regions span residues 660 to 756 (VGGL…FPDR) and 801 to 823 (SDDSEKNPSKASQSSRDTLSSGV). Pro residues predominate over residues 707–720 (EPQPPLPPEPPEPS). The segment covering 809-823 (SKASQSSRDTLSSGV) has biased composition (polar residues).

This sequence belongs to the protein kinase superfamily. STE Ser/Thr protein kinase family. MAP kinase kinase kinase subfamily. As to quaternary structure, interacts with TRAF2, TRAF3, TRAF5, TRAF6, IKKA and NF-kappa-B2/P100. Interacts with PELI3. Interacts with NIBP; the interaction is direct. Interacts with ARRB1 and ARRB2. Interacts with GRB10. Interacts with ZFP91. Interacts with NLRP12; this interaction promotes proteasomal degradation of MAP3K14. Directly interacts with DDX3X. Interacts (via C-terminus and kinase domain) with PPPC3A (via N-terminus) and PPP3CB. Phosphorylation at Thr-561 is required to activate its kinase activity and 'Lys-63'-linked polyubiquitination. Phosphorylated by CHUK/IKKA leading to MAP3K14 destabilization. Autophosphorylated. Post-translationally, ubiquitinated. Undergoes both 'Lys-48'- and 'Lys-63'-linked polyubiquitination. 'Lys-48'-linked polyubiquitination leads to its degradation by the proteasome, while 'Lys-63'-linked polyubiquitination stabilizes and activates it.

It is found in the cytoplasm. The enzyme catalyses L-seryl-[protein] + ATP = O-phospho-L-seryl-[protein] + ADP + H(+). It catalyses the reaction L-threonyl-[protein] + ATP = O-phospho-L-threonyl-[protein] + ADP + H(+). In terms of biological role, lymphotoxin beta-activated kinase which seems to be exclusively involved in the activation of NF-kappa-B and its transcriptional activity. Phosphorylates CHUK/IKKA. Promotes proteolytic processing of NFKB2/P100, which leads to activation of NF-kappa-B via the non-canonical pathway. Has an essential role in the non-canonical NF-kappa-B signalining that regulates genes encoding molecules involved in B-cell survival, lymphoid organogenesis, and immune response. Could act in a receptor-selective manner. The chain is Mitogen-activated protein kinase kinase kinase 14 from Mus musculus (Mouse).